A 558-amino-acid polypeptide reads, in one-letter code: CTP synthase (558 aa).

An amidoligase domain region spans residues 1 to 267; that stretch reads MAKFVFVTGG…CLEMLDVLNL (267 aa). Residue serine 13 coordinates CTP. Serine 13 is a binding site for UTP. Residues 14-19 and aspartate 71 each bind ATP; that span reads SIGKGI. Residues aspartate 71 and glutamate 141 each coordinate Mg(2+). CTP contacts are provided by residues 148–150, 188–193, and lysine 224; these read DIE and KTKPTQ. Residues 188–193 and lysine 224 each bind UTP; that span reads KTKPTQ. The Glutamine amidotransferase type-1 domain occupies 292 to 534; sequence KVALVGKYVQ…IEAAQLRLPA (243 aa). Glycine 354 lines the L-glutamine pocket. Catalysis depends on cysteine 381, which acts as the Nucleophile; for glutamine hydrolysis. L-glutamine-binding positions include 382-385, glutamate 405, and arginine 462; that span reads LGMQ. Catalysis depends on residues histidine 507 and glutamate 509. Residues 536–558 form a disordered region; the sequence is PDEALRRQSQTNISAQEQPSRIG. Positions 542 to 558 are enriched in polar residues; the sequence is RQSQTNISAQEQPSRIG.

It belongs to the CTP synthase family. In terms of assembly, homotetramer.

It carries out the reaction UTP + L-glutamine + ATP + H2O = CTP + L-glutamate + ADP + phosphate + 2 H(+). It catalyses the reaction L-glutamine + H2O = L-glutamate + NH4(+). The enzyme catalyses UTP + NH4(+) + ATP = CTP + ADP + phosphate + 2 H(+). It functions in the pathway pyrimidine metabolism; CTP biosynthesis via de novo pathway; CTP from UDP: step 2/2. With respect to regulation, allosterically activated by GTP, when glutamine is the substrate; GTP has no effect on the reaction when ammonia is the substrate. The allosteric effector GTP functions by stabilizing the protein conformation that binds the tetrahedral intermediate(s) formed during glutamine hydrolysis. Inhibited by the product CTP, via allosteric rather than competitive inhibition. In terms of biological role, catalyzes the ATP-dependent amination of UTP to CTP with either L-glutamine or ammonia as the source of nitrogen. Regulates intracellular CTP levels through interactions with the four ribonucleotide triphosphates. This is CTP synthase from Prochlorococcus marinus (strain MIT 9313).